The sequence spans 55 residues: Neurotoxin BmKX-A1-S31 (55 aa).

The first 23 residues, 1–23 (MKIFFAVLVILVLFSMLIWTAYG), serve as a signal peptide directing secretion. 3 disulfide bridges follow: cysteine 30–cysteine 45, cysteine 36–cysteine 50, and cysteine 39–cysteine 53.

In terms of tissue distribution, expressed by the venom gland.

It is found in the secreted. The polypeptide is Neurotoxin BmKX-A1-S31 (Olivierus martensii (Manchurian scorpion)).